A 188-amino-acid chain; its full sequence is Adenine phosphoribosyltransferase (188 aa).

The protein belongs to the purine/pyrimidine phosphoribosyltransferase family. In terms of assembly, homodimer.

It is found in the cytoplasm. The enzyme catalyses AMP + diphosphate = 5-phospho-alpha-D-ribose 1-diphosphate + adenine. The protein operates within purine metabolism; AMP biosynthesis via salvage pathway; AMP from adenine: step 1/1. In terms of biological role, catalyzes a salvage reaction resulting in the formation of AMP, that is energically less costly than de novo synthesis. This is Adenine phosphoribosyltransferase from Burkholderia multivorans (strain ATCC 17616 / 249).